The primary structure comprises 425 residues: Glutamyl-tRNA reductase (425 aa).

Substrate is bound by residues 49–52 (TCNR), S107, 112–114 (EPQ), and Q118. C50 (nucleophile) is an active-site residue. NADP(+) is bound at residue 187–192 (GAGETI).

The protein belongs to the glutamyl-tRNA reductase family. As to quaternary structure, homodimer.

It catalyses the reaction (S)-4-amino-5-oxopentanoate + tRNA(Glu) + NADP(+) = L-glutamyl-tRNA(Glu) + NADPH + H(+). It participates in porphyrin-containing compound metabolism; protoporphyrin-IX biosynthesis; 5-aminolevulinate from L-glutamyl-tRNA(Glu): step 1/2. Catalyzes the NADPH-dependent reduction of glutamyl-tRNA(Glu) to glutamate 1-semialdehyde (GSA). The polypeptide is Glutamyl-tRNA reductase (Pseudomonas syringae pv. tomato (strain ATCC BAA-871 / DC3000)).